Consider the following 156-residue polypeptide: Ribosomal RNA large subunit methyltransferase H (156 aa).

S-adenosyl-L-methionine-binding positions include leucine 73, glycine 104, and 123 to 128 (IGPLTL).

This sequence belongs to the RNA methyltransferase RlmH family. Homodimer.

The protein localises to the cytoplasm. The catalysed reaction is pseudouridine(1915) in 23S rRNA + S-adenosyl-L-methionine = N(3)-methylpseudouridine(1915) in 23S rRNA + S-adenosyl-L-homocysteine + H(+). Specifically methylates the pseudouridine at position 1915 (m3Psi1915) in 23S rRNA. The polypeptide is Ribosomal RNA large subunit methyltransferase H (Stenotrophomonas maltophilia (strain R551-3)).